The primary structure comprises 96 residues: Large ribosomal subunit protein eL30 (96 aa).

Belongs to the eukaryotic ribosomal protein eL30 family.

The sequence is that of Large ribosomal subunit protein eL30 from Methanosphaerula palustris (strain ATCC BAA-1556 / DSM 19958 / E1-9c).